Here is a 129-residue protein sequence, read N- to C-terminus: Prefoldin subunit alpha (129 aa).

It belongs to the prefoldin alpha subunit family. In terms of assembly, heterohexamer of two alpha and four beta subunits.

The protein resides in the cytoplasm. Molecular chaperone capable of stabilizing a range of proteins. Seems to fulfill an ATP-independent, HSP70-like function in archaeal de novo protein folding. The sequence is that of Prefoldin subunit alpha from Thermofilum pendens (strain DSM 2475 / Hrk 5).